Consider the following 732-residue polypeptide: Catalase-peroxidase (732 aa).

A cross-link (tryptophyl-tyrosyl-methioninium (Trp-Tyr) (with M-245)) is located at residues 96–219 (WHSAGTYRIG…LGAVQMGLIY (124 aa)). His97 (proton acceptor) is an active-site residue. Positions 219–245 (YVNPEGPNGHPDPVASGRDIRETFGRM) form a cross-link, tryptophyl-tyrosyl-methioninium (Tyr-Met) (with W-96). His260 lines the heme b pocket.

It belongs to the peroxidase family. Peroxidase/catalase subfamily. Homodimer or homotetramer. The cofactor is heme b. In terms of processing, formation of the three residue Trp-Tyr-Met cross-link is important for the catalase, but not the peroxidase activity of the enzyme.

It carries out the reaction H2O2 + AH2 = A + 2 H2O. It catalyses the reaction 2 H2O2 = O2 + 2 H2O. In terms of biological role, bifunctional enzyme with both catalase and broad-spectrum peroxidase activity. In Acaryochloris marina (strain MBIC 11017), this protein is Catalase-peroxidase.